The primary structure comprises 109 residues: MAMKNLLKDDDIKKALDQFKAADSFDHKKFFDVVGLKALSADNVKLVFKALDVDASGFIEEEELKFVLKGFSADGRDLTDKETKAFLAAADKDGDGKIGIDEFEALVHE.

The residue at position 2 (Ala-2) is an N-acetylalanine. EF-hand domains follow at residues 39-74 (LSADNVKLVFKALDVDASGFIEEEELKFVLKGFSAD) and 78-109 (LTDKETKAFLAAADKDGDGKIGIDEFEALVHE). Residues Asp-52, Asp-54, Ser-56, Phe-58, Glu-60, Glu-63, Asp-91, Asp-93, Asp-95, Lys-97, and Glu-102 each contribute to the Ca(2+) site.

This sequence belongs to the parvalbumin family.

Functionally, in muscle, parvalbumin is thought to be involved in relaxation after contraction. It binds two calcium ions. The sequence is that of Parvalbumin-7 (pvalb7) from Danio rerio (Zebrafish).